A 365-amino-acid chain; its full sequence is 4-hydroxy-3-methylbut-2-en-1-yl diphosphate synthase (flavodoxin) (365 aa).

Cys-265, Cys-268, Cys-300, and Glu-307 together coordinate [4Fe-4S] cluster.

This sequence belongs to the IspG family. It depends on [4Fe-4S] cluster as a cofactor.

The enzyme catalyses (2E)-4-hydroxy-3-methylbut-2-enyl diphosphate + oxidized [flavodoxin] + H2O + 2 H(+) = 2-C-methyl-D-erythritol 2,4-cyclic diphosphate + reduced [flavodoxin]. The protein operates within isoprenoid biosynthesis; isopentenyl diphosphate biosynthesis via DXP pathway; isopentenyl diphosphate from 1-deoxy-D-xylulose 5-phosphate: step 5/6. Functionally, converts 2C-methyl-D-erythritol 2,4-cyclodiphosphate (ME-2,4cPP) into 1-hydroxy-2-methyl-2-(E)-butenyl 4-diphosphate. This Bacillus mycoides (strain KBAB4) (Bacillus weihenstephanensis) protein is 4-hydroxy-3-methylbut-2-en-1-yl diphosphate synthase (flavodoxin).